A 574-amino-acid chain; its full sequence is MKIKEIIPVALGEKTPDLLIKNVKLLNVYTGNIEKTNIAILKKRIAGIGNEYNVGKEIFNAKNLYAIPGLIDAHVHIESSMLSPIEFAKMILPNGTTTIIADPHEIANVLGVEGINYMIKATEGIPLNVYFAIPSAVPATFLETSGAILGAEDMVSLLEKYPFRLIALGEVMNYPGVLNCDRELITKIEILRHKYKKIDGHAPGLSGKQLNAYIDAFVRSDHECETKSEALEKLSKGMHIFIREGTAARNLRSLIPAVNILNHFFFSFCTDDRDPEDIYKRGHINQIVKEAIGQGLDPVIAIRMATINTAKYFNLRSMGAISPGYKSDIVLVDNLYDFNILYVIKDSKFVVKDGKIDLKIESVFKDVPTTIGKINITKNYSLKVKNRNKKIRIISIKKFSLITEESIVSPKVSKNEIISDVENDIVKIAVFDRHNASGFSIGFVKGTGIKNGAIATTIGHDSHNLAVLGTNDKDMELAIKRILEINGGIVVIKDKKVISELSLPIAGLMSDETYNTVIKKLQHLKKSIEKLGTKNDVLMNIHFLQLAVIPKLKITDKGLIDVENQKIVDLFVEV.

Belongs to the metallo-dependent hydrolases superfamily. Adenine deaminase family. Mn(2+) serves as cofactor.

It carries out the reaction adenine + H2O + H(+) = hypoxanthine + NH4(+). The polypeptide is Adenine deaminase (Thermosipho melanesiensis (strain DSM 12029 / CIP 104789 / BI429)).